A 607-amino-acid polypeptide reads, in one-letter code: Large ribosomal subunit assembly factor BipA (607 aa).

The tr-type G domain maps to 3–198 (HSIRNIAIIA…SIIKYAPAPN (196 aa)). Residues 15 to 20 (DHGKTT) and 128 to 131 (NKID) each bind GTP.

Belongs to the TRAFAC class translation factor GTPase superfamily. Classic translation factor GTPase family. BipA subfamily. Monomer.

It localises to the cytoplasm. It catalyses the reaction GTP + H2O = GDP + phosphate + H(+). Functionally, a 50S ribosomal subunit assembly protein with GTPase activity, required for 50S subunit assembly at low temperatures, may also play a role in translation. Binds GTP and analogs. Binds the 70S ribosome between the 30S and 50S subunits, in a similar position as ribosome-bound EF-G; it contacts a number of ribosomal proteins, both rRNAs and the A-site tRNA. In Buchnera aphidicola subsp. Acyrthosiphon pisum (strain APS) (Acyrthosiphon pisum symbiotic bacterium), this protein is Large ribosomal subunit assembly factor BipA.